Reading from the N-terminus, the 355-residue chain is Uroporphyrinogen decarboxylase (355 aa).

Substrate contacts are provided by residues 27–31 (RQAGR), Phe46, Asp78, Tyr155, Ser210, and His328.

Belongs to the uroporphyrinogen decarboxylase family. As to quaternary structure, homodimer.

The protein resides in the cytoplasm. It catalyses the reaction uroporphyrinogen III + 4 H(+) = coproporphyrinogen III + 4 CO2. It functions in the pathway porphyrin-containing compound metabolism; protoporphyrin-IX biosynthesis; coproporphyrinogen-III from 5-aminolevulinate: step 4/4. Functionally, catalyzes the decarboxylation of four acetate groups of uroporphyrinogen-III to yield coproporphyrinogen-III. The chain is Uroporphyrinogen decarboxylase from Pseudomonas aeruginosa (strain ATCC 15692 / DSM 22644 / CIP 104116 / JCM 14847 / LMG 12228 / 1C / PRS 101 / PAO1).